A 641-amino-acid chain; its full sequence is 1,3-beta-glucanosyltransferase PGA5 (641 aa).

Positions 1-23 (MTTLSTIWLFLITITAIFQLGLS) are cleaved as a signal peptide. The N-linked (GlcNAc...) asparagine glycan is linked to Asn25. A disulfide bridge links Cys106 with Cys135. Residues Tyr124, Asn192, Glu193, Asp234, and Arg239 each coordinate (1,3-beta-D-glucosyl)n. Glu193 serves as the catalytic Proton donor. 6 cysteine pairs are disulfide-bonded: Cys248/Cys390, Cys276/Cys307, Cys424/Cys474, Cys426/Cys528, Cys433/Cys498, and Cys451/Cys456. Catalysis depends on Glu304, which acts as the Nucleophile. Tyr336 is a (1,3-beta-D-glucosyl)n binding site. A disordered region spans residues 535-613 (KEEEKEVQEE…SPKTSKSIAG (79 aa)). Over residues 571–581 (KSKEKEKGKLI) the composition is skewed to basic and acidic residues. The segment covering 582–593 (EEEEEEEEEEEE) has biased composition (acidic residues). A compositionally biased stretch (polar residues) spans 596-610 (KTPSSGEKSPKTSKS). Asn621 carries an N-linked (GlcNAc...) asparagine glycan. Asp622 carries the GPI-anchor amidated aspartate lipid modification. The propeptide at 623–641 (SIWKTFIEILFTCSAAILI) is removed in mature form.

It belongs to the glycosyl hydrolase 72 family.

It localises to the cell membrane. In terms of biological role, splits internally a 1,3-beta-glucan molecule and transfers the newly generated reducing end (the donor) to the non-reducing end of another 1,3-beta-glucan molecule (the acceptor) forming a 1,3-beta linkage, resulting in the elongation of 1,3-beta-glucan chains in the cell wall. Involved in spore wall assembly. The chain is 1,3-beta-glucanosyltransferase PGA5 (PGA5) from Candida albicans (strain SC5314 / ATCC MYA-2876) (Yeast).